The sequence spans 307 residues: MQIRHFLQFKDFDRQEYEYLFDRTRWIKNEFKQYRRYWPLTDRTLAMIFEKHSTRTRLSFEAGMHQLGGSAIYLSTRDTQLGRGEPVEDAARVISRMVDIITLRTHEHGVIERFAENSRVPVINGLTDEYHPCQILADIFTFMEHRGSIAGKTVAWIGDSNNVCNTWLQAAEVFDFNVHVSTPPGYEVEPERAGLYGTDHYEQFVSPHDAVKDADLVTTDVWTSMGFEDEADTRKNDFADFRVDAEMMACAKEEALFMHCLPAHRGEEVDAEVIDGPQSVVWDEAENRLHTQKALMEYLLLGRIGVR.

Carbamoyl phosphate is bound by residues 53–56, glutamine 80, arginine 104, and 131–134; these read STRT and HPCQ. L-ornithine is bound by residues asparagine 162, aspartate 220, and 224–225; that span reads SM. Carbamoyl phosphate-binding positions include 260-261 and arginine 288; that span reads CL.

The protein belongs to the aspartate/ornithine carbamoyltransferase superfamily. OTCase family.

The protein localises to the cytoplasm. It carries out the reaction carbamoyl phosphate + L-ornithine = L-citrulline + phosphate + H(+). The protein operates within amino-acid biosynthesis; L-arginine biosynthesis; L-arginine from L-ornithine and carbamoyl phosphate: step 1/3. In terms of biological role, reversibly catalyzes the transfer of the carbamoyl group from carbamoyl phosphate (CP) to the N(epsilon) atom of ornithine (ORN) to produce L-citrulline. This Nitrosomonas europaea (strain ATCC 19718 / CIP 103999 / KCTC 2705 / NBRC 14298) protein is Ornithine carbamoyltransferase.